The following is a 206-amino-acid chain: 2,3-bisphosphoglycerate-dependent phosphoglycerate mutase (206 aa).

Residues 9 to 16 (RHGQSEWN), 22 to 23 (TG), arginine 61, 88 to 91 (ERDY), lysine 99, 115 to 116 (RR), and 159 to 160 (GN) contribute to the substrate site. Catalysis depends on histidine 10, which acts as the Tele-phosphohistidine intermediate. The active-site Proton donor/acceptor is glutamate 88.

It belongs to the phosphoglycerate mutase family. BPG-dependent PGAM subfamily. Homodimer.

The enzyme catalyses (2R)-2-phosphoglycerate = (2R)-3-phosphoglycerate. It participates in carbohydrate degradation; glycolysis; pyruvate from D-glyceraldehyde 3-phosphate: step 3/5. In terms of biological role, catalyzes the interconversion of 2-phosphoglycerate and 3-phosphoglycerate. This chain is 2,3-bisphosphoglycerate-dependent phosphoglycerate mutase, found in Brucella anthropi (strain ATCC 49188 / DSM 6882 / CCUG 24695 / JCM 21032 / LMG 3331 / NBRC 15819 / NCTC 12168 / Alc 37) (Ochrobactrum anthropi).